The sequence spans 717 residues: Ribosomal RNA large subunit methyltransferase K/L (717 aa).

One can recognise a THUMP domain in the interval 44-155 (DAYKVCIYSY…KQFVNVFLCL (112 aa)).

It belongs to the methyltransferase superfamily. RlmKL family.

The protein resides in the cytoplasm. It catalyses the reaction guanosine(2445) in 23S rRNA + S-adenosyl-L-methionine = N(2)-methylguanosine(2445) in 23S rRNA + S-adenosyl-L-homocysteine + H(+). It carries out the reaction guanosine(2069) in 23S rRNA + S-adenosyl-L-methionine = N(2)-methylguanosine(2069) in 23S rRNA + S-adenosyl-L-homocysteine + H(+). Its function is as follows. Specifically methylates the guanine in position 2445 (m2G2445) and the guanine in position 2069 (m7G2069) of 23S rRNA. The protein is Ribosomal RNA large subunit methyltransferase K/L of Francisella tularensis subsp. holarctica (strain FTNF002-00 / FTA).